The sequence spans 198 residues: Recombination protein RecR (198 aa).

The C4-type zinc-finger motif lies at 58-73 (CKVCQTLTDKEICPIC). In terms of domain architecture, Toprim spans 81–175 (KVIMVVENTR…KVSRIASGVP (95 aa)).

Belongs to the RecR family.

Functionally, may play a role in DNA repair. It seems to be involved in an RecBC-independent recombinational process of DNA repair. It may act with RecF and RecO. This chain is Recombination protein RecR, found in Lachnoclostridium phytofermentans (strain ATCC 700394 / DSM 18823 / ISDg) (Clostridium phytofermentans).